Consider the following 623-residue polypeptide: V-type proton ATPase catalytic subunit A (623 aa).

ATP is bound at residue 252 to 259; that stretch reads GAFGCGKT.

The protein belongs to the ATPase alpha/beta chains family. In terms of assembly, V-ATPase is a heteromultimeric enzyme composed of a peripheral catalytic V1 complex (main components: subunits A, B, C, D, E, and F) attached to an integral membrane V0 proton pore complex (main component: the proteolipid protein).

The enzyme catalyses ATP + H2O + 4 H(+)(in) = ADP + phosphate + 5 H(+)(out). Functionally, catalytic subunit of the peripheral V1 complex of vacuolar ATPase. V-ATPase vacuolar ATPase is responsible for acidifying a variety of intracellular compartments in eukaryotic cells. The polypeptide is V-type proton ATPase catalytic subunit A (Citrus unshiu (Satsuma mandarin)).